The chain runs to 125 residues: Large ribosomal subunit protein bL12 (125 aa).

It belongs to the bacterial ribosomal protein bL12 family. In terms of assembly, homodimer. Part of the ribosomal stalk of the 50S ribosomal subunit. Forms a multimeric L10(L12)X complex, where L10 forms an elongated spine to which 2 to 4 L12 dimers bind in a sequential fashion. Binds GTP-bound translation factors.

Forms part of the ribosomal stalk which helps the ribosome interact with GTP-bound translation factors. Is thus essential for accurate translation. The chain is Large ribosomal subunit protein bL12 from Rhizobium leguminosarum bv. trifolii (strain WSM2304).